A 231-amino-acid polypeptide reads, in one-letter code: MSEIKDVIVQGLWKNNSALVQLLGLCPLLAVTSTATNALGLGLATTLVLTLTNLTISTLRHWTPAEIRIPIYVMIIASVVSAVQMLINAYAFGLYQSLGIFIPLIVTNCIVVGRAEAFAAKKGPALSALDGFSIGMGATCAMFVLGSLREIIGNGTLFDGADALLGSWAKVLRVEIFHTDSPFLLAMLPPGAFIGLGLMLAGKYLIDERMKKRRAEAAAERALPNGETGNV.

6 consecutive transmembrane segments (helical) span residues 18–38 (ALVQLLGLCPLLAVTSTATNA), 39–59 (LGLGLATTLVLTLTNLTISTL), 63–83 (TPAEIRIPIYVMIIASVVSAV), 86–106 (LINAYAFGLYQSLGIFIPLIV), 125–145 (ALSALDGFSIGMGATCAMFVL), and 182–202 (PFLLAMLPPGAFIGLGLMLAG).

It belongs to the NqrDE/RnfAE family. The complex is composed of six subunits: RsxA, RsxB, RsxC, RsxD, RsxE and RsxG.

The protein localises to the cell inner membrane. Functionally, part of a membrane-bound complex that couples electron transfer with translocation of ions across the membrane. Required to maintain the reduced state of SoxR. The polypeptide is Ion-translocating oxidoreductase complex subunit E (Escherichia coli (strain ATCC 8739 / DSM 1576 / NBRC 3972 / NCIMB 8545 / WDCM 00012 / Crooks)).